The following is a 785-amino-acid chain: Peptide transporter family 2 (785 aa).

Transmembrane regions (helical) follow at residues 46–66 (FSFY…LNFS), 72–92 (VLFH…SILA), 99–119 (FWTI…LAFS), 134–154 (LLGL…VSAF), 167–187 (ISLF…ISMW), 208–228 (FGIP…GSFW), 303–323 (VIVM…QGST), 345–365 (MGVL…SIVY), and 382–402 (AGGG…QLFV). Residue N467 is glycosylated (N-linked (GlcNAc...) asparagine). Transmembrane regions (helical) follow at residues 670–690 (ILWQ…FSIT), 711–731 (WLFT…LNIF), and 738–758 (MFVF…LAVF).

It belongs to the major facilitator superfamily. Proton-dependent oligopeptide transporter (POT/PTR) (TC 2.A.17) family. In terms of tissue distribution, expressed in vulval, pharyngeal and anal muscles.

It is found in the membrane. Proton-dependent uptake of di- or tripeptides, and to a minor extent tetrapeptides. Transport is independent of sodium and chloride ions. Protein shows high affinity to peptide substrates. This chain is Peptide transporter family 2 (pept-2), found in Caenorhabditis elegans.